We begin with the raw amino-acid sequence, 388 residues long: MANDYFFTSESVSEGHPDKVADQISDSILDAILAQDPTARVAAETLCNTGLVVLAGEITTNANVDYIQVARNTLREIGYDNTDYGIDYKGCAVLVAYDKQSPDIAQGVDKAHDDGLDQGAGDQGLMFGYACDETAELMPLPIHLSHRLVERQSQLRRDGRLNWLRPDAKSQVTLRYVDGKPDSIDTVVLSTQHDEDISLEKLREAVIEEIIKPVLPKHLIKGAINFLVNPTGRFVIGGPQGDCGLTGRKIIVDTYGGAAPHGGGAFSGKDPSKVDRSAAYAGRYVAKNVVAAGLASKCLIQISYAIGVAKPTSVMVSAFGTGKIVDEKIAQLVSEHFDLRPKGIVKMLNLLRPIYKKTAAYGHFGREEPEFSWEQTDKAAALRAAAGL.

H16 serves as a coordination point for ATP. A Mg(2+)-binding site is contributed by D18. E44 contacts K(+). L-methionine is bound by residues E57 and Q100. The flexible loop stretch occupies residues 100-110; the sequence is QSPDIAQGVDK. Residues 167-169, 233-234, D242, 248-249, A265, and K269 each bind ATP; these read DAK, RF, and RK. D242 is a binding site for L-methionine. Residue K273 coordinates L-methionine.

This sequence belongs to the AdoMet synthase family. As to quaternary structure, homotetramer; dimer of dimers. Mg(2+) is required as a cofactor. K(+) serves as cofactor.

The protein resides in the cytoplasm. The catalysed reaction is L-methionine + ATP + H2O = S-adenosyl-L-methionine + phosphate + diphosphate. It participates in amino-acid biosynthesis; S-adenosyl-L-methionine biosynthesis; S-adenosyl-L-methionine from L-methionine: step 1/1. Its function is as follows. Catalyzes the formation of S-adenosylmethionine (AdoMet) from methionine and ATP. The overall synthetic reaction is composed of two sequential steps, AdoMet formation and the subsequent tripolyphosphate hydrolysis which occurs prior to release of AdoMet from the enzyme. This Polynucleobacter necessarius subsp. necessarius (strain STIR1) protein is S-adenosylmethionine synthase.